A 437-amino-acid polypeptide reads, in one-letter code: Adenosylhomocysteinase (437 aa).

3 residues coordinate substrate: threonine 58, aspartate 133, and glutamate 158. Position 159-161 (159-161 (TTT)) interacts with NAD(+). Residues lysine 188 and aspartate 192 each coordinate substrate. NAD(+) contacts are provided by residues asparagine 193, 224 to 229 (GDVGKG), glutamate 245, 301 to 303 (VGH), and asparagine 348.

Belongs to the adenosylhomocysteinase family. In terms of assembly, homotetramer. NAD(+) is required as a cofactor.

It carries out the reaction S-adenosyl-L-homocysteine + H2O = L-homocysteine + adenosine. It participates in amino-acid biosynthesis; L-homocysteine biosynthesis; L-homocysteine from S-adenosyl-L-homocysteine: step 1/1. Functionally, adenosylhomocysteine is a competitive inhibitor of S-adenosyl-L-methionine-dependent methyl transferase reactions; therefore adenosylhomocysteinase may play a key role in the control of methylations via regulation of the intracellular concentration of adenosylhomocysteine. This is Adenosylhomocysteinase (ahcy-1) from Caenorhabditis elegans.